Consider the following 245-residue polypeptide: uncharacterized protein (245 aa).

The first 19 residues, 1-19 (MKLTQFISYAILSLSGVQA), serve as a signal peptide directing secretion.

The protein resides in the secreted. This is an uncharacterized protein from Arthroderma benhamiae (strain ATCC MYA-4681 / CBS 112371) (Trichophyton mentagrophytes).